Reading from the N-terminus, the 638-residue chain is Rik1-associated factor 1 (638 aa).

WD repeat units follow at residues Lys297 to Phe336, Thr486 to Ser525, Glu544 to Gln583, and Glu587 to Phe626.

In terms of assembly, component of the Clr4 methyltransferase complex (ClrC) composed of at least clr4, rik1, pcu4, rbx1, raf1 and raf2. The cullin pcu4, rik1, raf1, raf2 and the ring-box protein rbx1 are components of an E3 ubiquitin ligase, whose activity is essential for heterochromatin assembly. Interacts with nup189.

The protein localises to the cytoplasm. It is found in the nucleus. Its subcellular location is the chromosome. In terms of biological role, component of the Clr4 methyltransferase complex (ClrC) which contributes to the establishment of heterochromatin by specifically methylating histone H3 to form H3K9me. ClrC preferentially ubiquitylates H3K14 and ClrC-mediated H3 ubiquitination promotes clr4 methyltransferase activity for the methylation of H3K9. H3K9me represents a specific tag for epigenetic transcriptional repression by recruiting swi6/HP1 to methylated histones which leads to transcriptional silencing within centromeric heterochromatin, telomeric regions and at the silent mating-type loci. Has a role in both mitotic and meiotic chromosome segregation. The sequence is that of Rik1-associated factor 1 (raf1) from Schizosaccharomyces pombe (strain 972 / ATCC 24843) (Fission yeast).